A 1460-amino-acid polypeptide reads, in one-letter code: DNA-binding protein RFX7 (1460 aa).

Residues 1–34 form a disordered region; the sequence is MAEEQQQPPPQQPDAHQQLPPSAPNSGVALPALV. Positions 108-183 form a DNA-binding region, RFX-type winged-helix; the sequence is AFSWIRNTLE…YCYSGLRKKA (76 aa). Residues 188–193 carry the PxLPxI/L motif; mediates interaction with ANKRA2 and RFXANK motif; it reads PTLPNL. The interval 308 to 352 is disordered; it reads QRKIQKKQQEQKLQSPLPGESAAKKSESATSNGVTNLPNGNPSIL. S322 bears the Phosphoserine mark. The segment covering 337–352 has biased composition (polar residues); it reads TSNGVTNLPNGNPSIL. The residue at position 379 (S379) is a Phosphoserine. Positions 404–416 are enriched in polar residues; the sequence is SVKQAPKTPQNVP. A disordered region spans residues 404–428; it reads SVKQAPKTPQNVPASPGGDRSARHR. A phosphoserine mark is found at S418 and S455. A compositionally biased stretch (polar residues) spans 481–513; that stretch reads TPSNSNTPLKHSASVSSATGTTEESRSVPQIKN. Disordered stretches follow at residues 481-585, 632-715, and 917-1015; these read TPSN…PSNE, TFTS…AQIP, and QSVT…SVPP. Positions 515-535 are enriched in low complexity; that stretch reads SVVSLQSPGSRSSSAGGTSAV. The segment covering 537 to 549 has biased composition (basic and acidic residues); sequence VKVEPETSSDEHP. 2 stretches are compositionally biased toward polar residues: residues 563 to 583 and 632 to 644; these read QTPS…QKPS and TFTS…NGDS. At T564 the chain carries Phosphothreonine. S662 carries the phosphoserine modification. K704 is subject to N6-acetyllysine. 2 stretches are compositionally biased toward polar residues: residues 705 to 715 and 917 to 933; these read TEGSTAGAQIP and QSVT…SSTH. Pro residues predominate over residues 947–963; sequence TPTPTPTPTPTPTPTPT. Over residues 971–1009 the composition is skewed to polar residues; the sequence is GSQSLSRESPCSRLAQTTPVDSALGSSRHTPIGTPHSNC. The residue at position 988 (T988) is a Phosphothreonine. Residues S1178 and S1329 each carry the phosphoserine modification.

Belongs to the RFX family. Interacts (via PxLPxI/L motif) with RFXANK (via ankyrin repeats). Interacts (via PxLPxI/L motif) with ANKRA2 (via ankyrin repeats). Widely expressed in many different tissue types including thymus and placenta, with high expression in brain. Expressed in both inhibitory and excitatory neurons in cortex.

It is found in the nucleus. In terms of biological role, transcription factor. Acts as a transcriptional activator by binding to promoter regions of target genes, such as PDCD4, PIK3IP1, MXD4, PNRC1, and RFX5. Plays a role in natural killer (NK) cell maintenance and immunity. May play a role in the process of ciliogenesis in the neural tube and neural tube closure. In Homo sapiens (Human), this protein is DNA-binding protein RFX7.